The sequence spans 55 residues: uncharacterized protein (55 aa).

A helical transmembrane segment spans residues 7–24 (VALVGAVLATLTACTGHI).

Its subcellular location is the membrane. This is an uncharacterized protein from Escherichia coli O157:H7.